The following is a 252-amino-acid chain: 5-oxoprolinase subunit A (252 aa).

It belongs to the LamB/PxpA family. As to quaternary structure, forms a complex composed of PxpA, PxpB and PxpC.

It catalyses the reaction 5-oxo-L-proline + ATP + 2 H2O = L-glutamate + ADP + phosphate + H(+). In terms of biological role, catalyzes the cleavage of 5-oxoproline to form L-glutamate coupled to the hydrolysis of ATP to ADP and inorganic phosphate. This Bacillus cytotoxicus (strain DSM 22905 / CIP 110041 / 391-98 / NVH 391-98) protein is 5-oxoprolinase subunit A.